We begin with the raw amino-acid sequence, 243 residues long: Polycomb group RING finger protein 1 (243 aa).

Lysine 12 participates in a covalent cross-link: Glycyl lysine isopeptide (Lys-Gly) (interchain with G-Cter in SUMO2). The RING-type zinc finger occupies 35-74 (CCLCAGYFVDATTITECLHTFCKSCIVKYLQTSKYCPMCN). Residues 74-231 (NIKIHETQPL…LSRWFGKPSP (158 aa)) form a necessary for repressor activity region. Lysine 76 participates in a covalent cross-link: Glycyl lysine isopeptide (Lys-Gly) (interchain with G-Cter in SUMO2). The required for the interaction with the KDM2B-SKP1 heterodimeric complex stretch occupies residues 138–239 (LPFTSFDHYY…SPLLLQYSVK (102 aa)). Residues 151 to 239 (EQLSLCLERL…SPLLLQYSVK (89 aa)) are RING-finger and WD40-associated ubiquitin-like domain (RAWUL); sufficient for interaction with BCOR and BCORL1.

As to quaternary structure, interacts with BCORL1, forming heterodimers. The PCGF1-BCORL1 heterodimeric complex interacts with the KDM2B-SKP1 heterodimeric complex to form a homotetrameric polycomb repression complex 1 (PRC1.1). Component of the repressive BCOR complex containing a Polycomb group subcomplex at least composed of RYBP, RING1 and RNF2/RING2. Specifically interacts with BCOR, RING1 and RNF2/RING2. Component of a PRC1-like complex. Interacts with CBX6, CBX7 and CBX8. Interacts with DPPA4, NANOG, POU5F1 and RYBP. In terms of tissue distribution, highly expressed in brain, cerebellum, heart and testis.

It localises to the nucleus. In terms of biological role, component of the Polycomb group (PcG) multiprotein BCOR complex, a complex required to maintain the transcriptionally repressive state of some genes, such as BCL6 and the cyclin-dependent kinase inhibitor, CDKN1A. Transcriptional repressor that may be targeted to the DNA by BCL6; this transcription repressor activity may be related to PKC signaling pathway. Represses CDKN1A expression by binding to its promoter, and this repression is dependent on the retinoic acid response element (RARE element). Promotes cell cycle progression and enhances cell proliferation as well. May have a positive role in tumor cell growth by down-regulating CDKN1A. Component of a Polycomb group (PcG) multiprotein PRC1-like complex, a complex class required to maintain the transcriptionally repressive state of many genes, including Hox genes, throughout development. PcG PRC1 complex acts via chromatin remodeling and modification of histones; it mediates monoubiquitination of histone H2A 'Lys-119', rendering chromatin heritably changed in its expressibility. Within the PRC1-like complex, regulates RNF2 ubiquitin ligase activity. Regulates the expression of DPPA4 and NANOG in the NT2 embryonic carcinoma cells. The protein is Polycomb group RING finger protein 1 (Pcgf1) of Rattus norvegicus (Rat).